We begin with the raw amino-acid sequence, 850 residues long: Mitochondrial escape protein 2 (850 aa).

The N-terminal 44 residues, M1–H44, are a transit peptide targeting the mitochondrion. The disordered stretch occupies residues H44–G66. At V45–R287 the chain is on the mitochondrial matrix side. Over residues S47–D64 the composition is skewed to polar residues. Positions T198–I272 constitute an RRM domain. Residues I288–I308 form a helical membrane-spanning segment. At R309–K850 the chain is on the mitochondrial intermembrane side. The segment covering K607 to A621 has biased composition (basic and acidic residues). The disordered stretch occupies residues K607 to S633.

The protein belongs to the YME2 family.

The protein resides in the mitochondrion inner membrane. Plays a role in maintaining the mitochondrial genome and in controlling the mtDNA escape. Involved in the regulation of mtDNA nucleotide structure and number. May have a dispensable role in early maturation of pre-rRNA. The sequence is that of Mitochondrial escape protein 2 (YME2) from Saccharomyces cerevisiae (strain ATCC 204508 / S288c) (Baker's yeast).